The sequence spans 355 residues: Probable nitronate monooxygenase (355 aa).

FMN is bound by residues N71, Q175, G180, G218, and 237–240 (QMGT).

Belongs to the nitronate monooxygenase family. NMO class I subfamily. FMN serves as cofactor.

The catalysed reaction is 3 propionate 3-nitronate + 3 O2 + H2O = 3 3-oxopropanoate + 2 nitrate + nitrite + H2O2 + 3 H(+). Functionally, nitronate monooxygenase that uses molecular oxygen to catalyze the oxidative denitrification of alkyl nitronates. Acts on propionate 3-nitronate (P3N), the presumed physiological substrate. Probably functions in the detoxification of P3N, a metabolic poison produced by plants and fungi as a defense mechanism. This is Probable nitronate monooxygenase from Staphylococcus aureus (strain MRSA252).